A 155-amino-acid chain; its full sequence is Histone H2B.4 (155 aa).

Over residues 1–28 (MAPKTKEEKPASEAVEPKAEAKPKAEKA) the composition is skewed to basic and acidic residues. Positions 1–62 (MAPKTKEEKP…GDKKKKKAKV (62 aa)) are disordered. Positions 29–40 (PKKKEKKAPAKK) are enriched in basic residues. K151 is covalently cross-linked (Glycyl lysine isopeptide (Lys-Gly) (interchain with G-Cter in ubiquitin)).

It belongs to the histone H2B family. As to quaternary structure, the nucleosome is a histone octamer containing two molecules each of H2A, H2B, H3 and H4 assembled in one H3-H4 heterotetramer and two H2A-H2B heterodimers. The octamer wraps approximately 147 bp of DNA. Post-translationally, monoubiquitinated to form H2BK143ub1; may give a specific tag for epigenetic transcriptional activation.

It localises to the nucleus. It is found in the chromosome. In terms of biological role, core component of nucleosome. Nucleosomes wrap and compact DNA into chromatin, limiting DNA accessibility to the cellular machineries which require DNA as a template. Histones thereby play a central role in transcription regulation, DNA repair, DNA replication and chromosomal stability. DNA accessibility is regulated via a complex set of post-translational modifications of histones, also called histone code, and nucleosome remodeling. This is Histone H2B.4 from Volvox carteri (Green alga).